The sequence spans 80 residues: MKPSGLALAFLVVFMMAIMYNSVQAAAIADADAEAEAIAKIKWGKIFKKGGKLIGKTALEAAANAAASEAISAMASQNEK.

The signal sequence occupies residues 1–25 (MKPSGLALAFLVVFMMAIMYNSVQA). Residues 26-39 (AAIADADAEAEAIA) constitute a propeptide that is removed on maturation.

This sequence belongs to the formicidae venom precursor-01 superfamily. In terms of processing, truncated sequences of this peptide have also been found in the venom. It is possible they have been cleaved in the venom. As to expression, expressed by the venom gland.

It localises to the secreted. Cationic amphipathic alpha-helical peptide with antimicrobial activities against E.coli (MIC=3.1 uM), S.aureus (MIC=25 uM), and S.cerevisiae (MIC=50 uM). Also shows histamine-releasing activity (37.5% at 10 uM). Does not show hemolytic activity, even at 50 uM. The protein is U-poneritoxin(01)-Om3a of Odontomachus monticola (Trap-jaw ant).